The primary structure comprises 159 residues: Ribosomal RNA large subunit methyltransferase H (159 aa).

S-adenosyl-L-methionine is bound by residues L76, G108, and 127–132 (FGKLTL).

Belongs to the RNA methyltransferase RlmH family. In terms of assembly, homodimer.

The protein localises to the cytoplasm. It catalyses the reaction pseudouridine(1915) in 23S rRNA + S-adenosyl-L-methionine = N(3)-methylpseudouridine(1915) in 23S rRNA + S-adenosyl-L-homocysteine + H(+). Its function is as follows. Specifically methylates the pseudouridine at position 1915 (m3Psi1915) in 23S rRNA. This Latilactobacillus sakei subsp. sakei (strain 23K) (Lactobacillus sakei subsp. sakei) protein is Ribosomal RNA large subunit methyltransferase H.